A 274-amino-acid polypeptide reads, in one-letter code: Proto-oncogene FRAT1 (274 aa).

Disordered stretches follow at residues 1-24, 55-107, 132-194, and 232-274; these read MPCR…DDSF, AHDR…PGAV, GASA…DDPH, and GPLS…VPGS. Acidic residues predominate over residues 7–23; it reads EEEEAGDEAEGEEDDDS. The interval 191–214 is involved in GSK-3 binding; the sequence is DDPHRLLQQLVLSGNLIKEAVRRL. A phosphoserine mark is found at Ser243 and Ser246.

Belongs to the GSK-3-binding protein family. Binds DVL1. Binds GSK-3 and prevent GSK-3-dependent phosphorylation. Post-translationally, phosphorylated. As to expression, highly expressed in testis. Lower level of expression in spleen, thymus and brain.

The protein localises to the cytoplasm. Positively regulates the Wnt signaling pathway by stabilizing beta-catenin through the association with GSK-3. May play a role in tumor progression and collaborate with PIM1 and MYC in lymphomagenesis. The chain is Proto-oncogene FRAT1 (Frat1) from Mus musculus (Mouse).